Here is a 444-residue protein sequence, read N- to C-terminus: Phosphoglucosamine mutase (444 aa).

Serine 102 (phosphoserine intermediate) is an active-site residue. Mg(2+) is bound by residues serine 102, aspartate 241, aspartate 243, and aspartate 245. Serine 102 bears the Phosphoserine mark.

The protein belongs to the phosphohexose mutase family. Requires Mg(2+) as cofactor. In terms of processing, activated by phosphorylation.

The enzyme catalyses alpha-D-glucosamine 1-phosphate = D-glucosamine 6-phosphate. Its function is as follows. Catalyzes the conversion of glucosamine-6-phosphate to glucosamine-1-phosphate. The sequence is that of Phosphoglucosamine mutase from Pasteurella multocida (strain Pm70).